A 100-amino-acid polypeptide reads, in one-letter code: Aspartyl/glutamyl-tRNA(Asn/Gln) amidotransferase subunit C (100 aa).

This sequence belongs to the GatC family. In terms of assembly, heterotrimer of A, B and C subunits.

The enzyme catalyses L-glutamyl-tRNA(Gln) + L-glutamine + ATP + H2O = L-glutaminyl-tRNA(Gln) + L-glutamate + ADP + phosphate + H(+). The catalysed reaction is L-aspartyl-tRNA(Asn) + L-glutamine + ATP + H2O = L-asparaginyl-tRNA(Asn) + L-glutamate + ADP + phosphate + 2 H(+). In terms of biological role, allows the formation of correctly charged Asn-tRNA(Asn) or Gln-tRNA(Gln) through the transamidation of misacylated Asp-tRNA(Asn) or Glu-tRNA(Gln) in organisms which lack either or both of asparaginyl-tRNA or glutaminyl-tRNA synthetases. The reaction takes place in the presence of glutamine and ATP through an activated phospho-Asp-tRNA(Asn) or phospho-Glu-tRNA(Gln). The protein is Aspartyl/glutamyl-tRNA(Asn/Gln) amidotransferase subunit C of Streptococcus suis (strain 98HAH33).